Consider the following 241-residue polypeptide: Chloride intracellular channel protein 1 (241 aa).

Position 2 is an N-acetylalanine (Ala2). The interval 2–90 is required for insertion into the membrane; the sequence is AEEQPQVELF…EEFLEAVLCP (89 aa). An N6-acetyllysine modification is found at Lys13. Positions 24 to 27 match the G-site motif; it reads CPFS. Cys24 and Cys59 are disulfide-bonded. The chain crosses the membrane as a helical span at residues 26–46; the sequence is FSQRLFMVLWLKGVTFNVTTV. The 141-residue stretch at 93–233 folds into the GST C-terminal domain; that stretch reads YPKLAALNPE…PDDEEIELAY (141 aa). Residue Lys119 is modified to N6-acetyllysine. Ser121 bears the Phosphoserine mark. Lys131 bears the N6-acetyllysine mark. Ser156 carries the phosphoserine modification. A Phosphotyrosine modification is found at Tyr233.

The protein belongs to the chloride channel CLIC family. In terms of assembly, monomer. Homodimer (in vitro). Interacts with TRAPPC2. Dimerization requires a conformation change that leads to the exposure of a large hydrophobic surface. In vivo, this may lead to membrane insertion.

The protein localises to the nucleus. Its subcellular location is the nucleus membrane. It is found in the cytoplasm. It localises to the cell membrane. The protein resides in the endoplasmic reticulum. The catalysed reaction is L-dehydroascorbate + 2 glutathione = glutathione disulfide + L-ascorbate. It carries out the reaction chloride(in) = chloride(out). The enzyme catalyses iodide(out) = iodide(in). It catalyses the reaction thiocyanate(in) = thiocyanate(out). The catalysed reaction is nitrate(in) = nitrate(out). It carries out the reaction bromide(in) = bromide(out). The enzyme catalyses fluoride(in) = fluoride(out). Functionally, in the soluble state, catalyzes glutaredoxin-like thiol disulfide exchange reactions with reduced glutathione as electron donor. Reduces selenite and dehydroascorbate and may act as an antioxidant during oxidative stress response. Can insert into membranes and form voltage-dependent multi-ion conductive channels. Membrane insertion seems to be redox-regulated and may occur only under oxidizing conditions. Involved in regulation of the cell cycle. The sequence is that of Chloride intracellular channel protein 1 (CLIC1) from Bos taurus (Bovine).